We begin with the raw amino-acid sequence, 424 residues long: Histidinol dehydrogenase (424 aa).

Residues tyrosine 127, glutamine 188, and asparagine 211 each contribute to the NAD(+) site. Residues serine 234, glutamine 256, and histidine 259 each coordinate substrate. Zn(2+) contacts are provided by glutamine 256 and histidine 259. Catalysis depends on proton acceptor residues glutamate 322 and histidine 323. The substrate site is built by histidine 323, aspartate 356, glutamate 410, and histidine 415. Zn(2+) is bound at residue aspartate 356. Histidine 415 lines the Zn(2+) pocket.

Belongs to the histidinol dehydrogenase family. Zn(2+) is required as a cofactor.

It catalyses the reaction L-histidinol + 2 NAD(+) + H2O = L-histidine + 2 NADH + 3 H(+). Its pathway is amino-acid biosynthesis; L-histidine biosynthesis; L-histidine from 5-phospho-alpha-D-ribose 1-diphosphate: step 9/9. Its function is as follows. Catalyzes the sequential NAD-dependent oxidations of L-histidinol to L-histidinaldehyde and then to L-histidine. The protein is Histidinol dehydrogenase of Methanococcus maripaludis (strain DSM 14266 / JCM 13030 / NBRC 101832 / S2 / LL).